The primary structure comprises 428 residues: Light-independent protochlorophyllide reductase subunit N (428 aa).

[4Fe-4S] cluster-binding residues include Cys29, Cys54, and Cys115.

Belongs to the BchN/ChlN family. As to quaternary structure, protochlorophyllide reductase is composed of three subunits; BchL, BchN and BchB. Forms a heterotetramer of two BchB and two BchN subunits. It depends on [4Fe-4S] cluster as a cofactor.

It carries out the reaction chlorophyllide a + oxidized 2[4Fe-4S]-[ferredoxin] + 2 ADP + 2 phosphate = protochlorophyllide a + reduced 2[4Fe-4S]-[ferredoxin] + 2 ATP + 2 H2O. It participates in porphyrin-containing compound metabolism; bacteriochlorophyll biosynthesis (light-independent). Its function is as follows. Component of the dark-operative protochlorophyllide reductase (DPOR) that uses Mg-ATP and reduced ferredoxin to reduce ring D of protochlorophyllide (Pchlide) to form chlorophyllide a (Chlide). This reaction is light-independent. The NB-protein (BchN-BchB) is the catalytic component of the complex. The protein is Light-independent protochlorophyllide reductase subunit N of Cereibacter sphaeroides (strain KD131 / KCTC 12085) (Rhodobacter sphaeroides).